The primary structure comprises 561 residues: Eukaryotic translation initiation factor 3 subunit D-1 (561 aa).

The tract at residues 98 to 164 (VQKPPHQRGR…RGPPPKMRES (67 aa)) is disordered. The segment covering 100–121 (KPPHQRGRFRNMRNSRSGRGRN) has biased composition (basic residues). Thr-128 is subject to Phosphothreonine. The tract at residues 289–303 (EFDLLTVNETSVEPP) is RNA gate.

This sequence belongs to the eIF-3 subunit D family. In terms of assembly, component of the eukaryotic translation initiation factor 3 (eIF-3) complex. The eIF-3 complex interacts with pix.

It is found in the cytoplasm. In terms of biological role, mRNA cap-binding component of the eukaryotic translation initiation factor 3 (eIF-3) complex, which is involved in protein synthesis of a specialized repertoire of mRNAs and, together with other initiation factors, stimulates binding of mRNA and methionyl-tRNAi to the 40S ribosome. The eIF-3 complex specifically targets and initiates translation of a subset of mRNAs involved in cell proliferation. In the eIF-3 complex, eif3d specifically recognizes and binds the 7-methylguanosine cap of a subset of mRNAs. This chain is Eukaryotic translation initiation factor 3 subunit D-1, found in Drosophila ananassae (Fruit fly).